The chain runs to 478 residues: FERM domain-containing protein B (478 aa).

3 disordered regions span residues 19–39 (ELIP…TITS), 129–196 (EENS…GFLT), and 202–221 (KAQS…TIAS). Composition is skewed to low complexity over residues 22–39 (PTQS…TITS) and 129–164 (EENS…ANDG). The FERM domain maps to 48–468 (VLIRIYFIDD…DWSEEWESKE (421 aa)). The segment covering 165–179 (SGSGSGSGSGSGSGS) has biased composition (gly residues). 2 stretches are compositionally biased toward low complexity: residues 180–189 (GTSTPNSPKG) and 204–216 (QSPQ…SSLS).

This Dictyostelium discoideum (Social amoeba) protein is FERM domain-containing protein B (frmB).